Here is a 622-residue protein sequence, read N- to C-terminus: Basal cell adhesion molecule (622 aa).

Residues 1-25 (MEPPDARAGLLWLTFLLSGYSGAQA) form the signal peptide. 2 Ig-like V-type domains span residues 26 to 135 (ELHV…SSVR) and 140 to 250 (PEDT…HTFR). Residues 26–541 (ELHVSVPPRV…GSVAPQTAQA (516 aa)) are Extracellular-facing. Disulfide bonds link cysteine 47–cysteine 118, cysteine 165–cysteine 230, and cysteine 284–cysteine 330. 3 consecutive Ig-like C2-type domains span residues 267-342 (PSTT…EEVQ), 356-435 (PLEL…QSFQ), and 442-532 (PELK…FHFG). N-linked (GlcNAc...) asparagine glycosylation is found at asparagine 314, asparagine 323, asparagine 370, and asparagine 377. Intrachain disulfides connect cysteine 378-cysteine 418 and cysteine 467-cysteine 516. A helical membrane pass occupies residues 542-562 (GVAVMAVAVSVGLLLLVVAAF). Over 563-622 (YCMRRKGRPGCCRRAEKGAPPAREPELSHSGSERPEHTGLLMGGPSGGGRGGSGGFGDEC) the chain is Cytoplasmic. Residues 574–622 (CRRAEKGAPPAREPELSHSGSERPEHTGLLMGGPSGGGRGGSGGFGDEC) form a disordered region. Positions 575–599 (RRAEKGAPPAREPELSHSGSERPEH) are enriched in basic and acidic residues. Serine 590, serine 592, serine 594, and serine 615 each carry phosphoserine. Over residues 603–622 (LMGGPSGGGRGGSGGFGDEC) the composition is skewed to gly residues.

As to quaternary structure, homodimer. Interacts with ITGA4:ITGB1. Interacts with spectrins SPTA1 and SPTB1. Epinephrine-stimulated phosphorylation of Ser-615 by PKA enhances adhesion to laminin. Ser-615 can also be phosphorylated by AKT1.

The protein resides in the cell membrane. Functionally, transmembrane glycoprotein that functions as both a receptor and an adhesion molecule playing a crucial role in cell adhesion, motility, migration and invasion. Extracellular domain enables binding to extracellular matrix proteins, such as laminin, integrin and other ligands while its intracellular domain interacts with cytoskeletal proteins like hemoglobin, facilitating cell signal transduction. Serves as a receptor for laminin alpha-5/LAMA5 to promote cell adhesion. Mechanistically, JAK2 induces BCAM phosphorylation and activates its adhesion to laminin by stimulating a Rap1/AKT signaling pathway in the absence of EPOR. This chain is Basal cell adhesion molecule (Bcam), found in Mus musculus (Mouse).